The primary structure comprises 371 residues: MKYFPLFPTLVFAARVVAFPAYASLAGLSQQELDAIIPTLEAREPGLPPGPLENSSAKLVNDEAHPWKPLRPGDIRGPCPGLNTLASHGYLPRNGVATPVQIINAVQEGLNFDNQAAVFATYAAHLVDGNLITDLLSIGRKTRLTGPDPPPPASVGGLNEHGTFEGDASMTRGDAFFGNNHDFNETLFEQLVDYSNRFGGGKYNLTVAGELRFKRIQDSIATNPNFSFVDFRFFTAYGETTFPANLFVDGRRDDGQLDMDAARSFFQFSRMPDDFFRAPSPRSGTGVEVVIQAHPMQPGRNVGKINSYTVDPTSSDFSTPCLMYEKFVNITVKSLYPNPTVQLRKALNTNLDFFFQGVAAGCTQVFPYGRD.

The signal sequence occupies residues 1–18; sequence MKYFPLFPTLVFAARVVA. Positions 19 to 43 are excised as a propeptide; the sequence is FPAYASLAGLSQQELDAIIPTLEAR. Asn-54 is a glycosylation site (N-linked (GlcNAc...) asparagine). Cys-79 is a binding site for heme. Residues Asn-184, Asn-204, Asn-225, and Asn-329 are each glycosylated (N-linked (GlcNAc...) asparagine). Cys-321 and Cys-362 are oxidised to a cystine.

Belongs to the chloroperoxidase family. Heme b serves as cofactor. In terms of processing, N-glycosylated.

It carries out the reaction RH + H2O2 = ROH + H2O.. Functionally, aromatic peroxidase that oxidizes aryl alcohols into the corresponding aldehydes and then into the corresponding benzoic acids. Oxidizes toluene and naphthalene. Catalyzes the regioselective peroxide-dependent hydroxylation of propranolol and diclofenac to 5-hydroxypropranolol and 4'-hydroxydiclofenac. Catalyzes the regioselective peroxide-dependent hydroxylation of naphthalene to 1-naphthol or 2-naphthol via a naphthalene 1,2-oxide intermediate. Catalyzes the regioselective peroxide-dependent oxidation of pyridine to pyridine N-oxide. Halogenates monochlorodimedone and phenol. Oxidizes the sulfur-containing heterocycle dibenzothiophene to yield ring-hydroxylation products and to a lesser extent sulfoxidation products. This chain is Aromatic peroxygenase, found in Cyclocybe aegerita (Black poplar mushroom).